Here is a 357-residue protein sequence, read N- to C-terminus: IGF-like family receptor 1 (357 aa).

Residues 1–22 (MGPLRLLPTAVLLLAQAAPWEA) form the signal peptide. Residues 23-160 (SQHCGRLEYW…HKAPQQAWPS (138 aa)) are Extracellular-facing. Residues 100–147 (IPSGSRGGTGRPCREPVPNKEPCPLTPGKSSILSSQEPSSPGIPSVSW) form a disordered region. Residues 129-139 (SSILSSQEPSS) are compositionally biased toward low complexity. The helical transmembrane segment at 161–181 (LSFALFLVLVLLVTSAIILLA) threads the bilayer. Residues 182-357 (LQRHHRRLDQ…KLGSSGACLA (176 aa)) lie on the Cytoplasmic side of the membrane.

The protein localises to the cell membrane. Functionally, probable cell membrane receptor for the IGF-like family protein IGFL. This is IGF-like family receptor 1 (IGFLR1) from Bos taurus (Bovine).